A 796-amino-acid chain; its full sequence is Lon protease 2 (796 aa).

Positions L9–I206 constitute a Lon N-terminal domain. G352–T359 is a binding site for ATP. The 180-residue stretch at I617 to I796 folds into the Lon proteolytic domain. Catalysis depends on residues S702 and K745.

Belongs to the peptidase S16 family. In terms of assembly, homohexamer. Organized in a ring with a central cavity.

The protein resides in the cytoplasm. The catalysed reaction is Hydrolysis of proteins in presence of ATP.. Functionally, ATP-dependent serine protease that mediates the selective degradation of mutant and abnormal proteins as well as certain short-lived regulatory proteins. Required for cellular homeostasis and for survival from DNA damage and developmental changes induced by stress. Degrades polypeptides processively to yield small peptide fragments that are 5 to 10 amino acids long. Binds to DNA in a double-stranded, site-specific manner. The chain is Lon protease 2 (lon2) from Borreliella burgdorferi (strain ATCC 35210 / DSM 4680 / CIP 102532 / B31) (Borrelia burgdorferi).